Reading from the N-terminus, the 1465-residue chain is DNA polymerase III PolC-type (1465 aa).

One can recognise an Exonuclease domain in the interval Y427–L583.

This sequence belongs to the DNA polymerase type-C family. PolC subfamily.

The protein localises to the cytoplasm. It catalyses the reaction DNA(n) + a 2'-deoxyribonucleoside 5'-triphosphate = DNA(n+1) + diphosphate. Required for replicative DNA synthesis. This DNA polymerase also exhibits 3' to 5' exonuclease activity. In Streptococcus pyogenes serotype M1, this protein is DNA polymerase III PolC-type.